A 353-amino-acid chain; its full sequence is UDP-N-acetylglucosamine--N-acetylmuramyl-(pentapeptide) pyrophosphoryl-undecaprenol N-acetylglucosamine transferase (353 aa).

UDP-N-acetyl-alpha-D-glucosamine-binding positions include 10-12 (TGG), Asn-124, Ser-183, and Gln-283.

Belongs to the glycosyltransferase 28 family. MurG subfamily.

It localises to the cell inner membrane. The catalysed reaction is di-trans,octa-cis-undecaprenyl diphospho-N-acetyl-alpha-D-muramoyl-L-alanyl-D-glutamyl-meso-2,6-diaminopimeloyl-D-alanyl-D-alanine + UDP-N-acetyl-alpha-D-glucosamine = di-trans,octa-cis-undecaprenyl diphospho-[N-acetyl-alpha-D-glucosaminyl-(1-&gt;4)]-N-acetyl-alpha-D-muramoyl-L-alanyl-D-glutamyl-meso-2,6-diaminopimeloyl-D-alanyl-D-alanine + UDP + H(+). It functions in the pathway cell wall biogenesis; peptidoglycan biosynthesis. In terms of biological role, cell wall formation. Catalyzes the transfer of a GlcNAc subunit on undecaprenyl-pyrophosphoryl-MurNAc-pentapeptide (lipid intermediate I) to form undecaprenyl-pyrophosphoryl-MurNAc-(pentapeptide)GlcNAc (lipid intermediate II). The protein is UDP-N-acetylglucosamine--N-acetylmuramyl-(pentapeptide) pyrophosphoryl-undecaprenol N-acetylglucosamine transferase of Helicobacter pylori (strain Shi470).